The primary structure comprises 395 residues: NAD(P)H-quinone oxidoreductase subunit H, chloroplastic (395 aa).

This sequence belongs to the complex I 49 kDa subunit family. In terms of assembly, NDH is composed of at least 16 different subunits, 5 of which are encoded in the nucleus.

It localises to the plastid. The protein localises to the chloroplast thylakoid membrane. It carries out the reaction a plastoquinone + NADH + (n+1) H(+)(in) = a plastoquinol + NAD(+) + n H(+)(out). The enzyme catalyses a plastoquinone + NADPH + (n+1) H(+)(in) = a plastoquinol + NADP(+) + n H(+)(out). Its function is as follows. NDH shuttles electrons from NAD(P)H:plastoquinone, via FMN and iron-sulfur (Fe-S) centers, to quinones in the photosynthetic chain and possibly in a chloroplast respiratory chain. The immediate electron acceptor for the enzyme in this species is believed to be plastoquinone. Couples the redox reaction to proton translocation, and thus conserves the redox energy in a proton gradient. This is NAD(P)H-quinone oxidoreductase subunit H, chloroplastic from Citrus sinensis (Sweet orange).